The sequence spans 323 residues: Breast cancer metastasis-suppressor 1-like protein (323 aa).

The segment covering 1–15 (MPVHSREKKENNHDE) has biased composition (basic and acidic residues). Positions 1 to 56 (MPVHSREKKENNHDEMEVDYGENEGSTSEEEETESSSVSEEGDSSEMDDEDCERRR) are disordered. The segment covering 16 to 51 (MEVDYGENEGSTSEEEETESSSVSEEGDSSEMDDED) has biased composition (acidic residues). Coiled-coil stretches lie at residues 50 to 82 (EDCE…KERL) and 147 to 178 (EKLL…ITSE).

Belongs to the BRMS1 family.

It localises to the nucleus. Its function is as follows. Involved in the histone deacetylase (HDAC1)-dependent transcriptional repression activity. The polypeptide is Breast cancer metastasis-suppressor 1-like protein (BRMS1L) (Gallus gallus (Chicken)).